A 215-amino-acid chain; its full sequence is Chaperone protein TorD (215 aa).

It belongs to the TorD/DmsD family. TorD subfamily.

The protein resides in the cytoplasm. Functionally, involved in the biogenesis of TorA. Acts on TorA before the insertion of the molybdenum cofactor and, as a result, probably favors a conformation of the apoenzyme that is competent for acquiring the cofactor. The protein is Chaperone protein TorD of Aliivibrio fischeri (strain ATCC 700601 / ES114) (Vibrio fischeri).